A 545-amino-acid polypeptide reads, in one-letter code: Triacylglycerol lipase ptl1 (545 aa).

Residues 182–358 (LYFNGGTAFG…EVCTPKNFIW (177 aa)) enclose the PNPLA domain. Positions 213 to 217 (GCASG) match the GXSXG motif.

It localises to the lipid droplet. It carries out the reaction a triacylglycerol + H2O = a diacylglycerol + a fatty acid + H(+). In terms of biological role, lipid particle-localized triacylglycerol (TAG) lipase. The lipid droplet/particle is a lipid storage compartment which serves as a depot of energy and building blocks for membrane lipid biosynthesis. Involved in the mobilization of the non-polar storage lipids triacylglycerols (TAGs) from lipid particles by hydrolysis of TAGs, releasing and supplying specific fatty acids to the appropriate metabolic pathways. The sequence is that of Triacylglycerol lipase ptl1 (ptl1) from Schizosaccharomyces pombe (strain 972 / ATCC 24843) (Fission yeast).